The primary structure comprises 262 residues: Small ribosomal subunit protein uS2 (262 aa).

The tract at residues 224 to 246 (GNQGEDQDDAQEQQVAADKKADS) is disordered.

The protein belongs to the universal ribosomal protein uS2 family.

The protein is Small ribosomal subunit protein uS2 of Lacticaseibacillus casei (strain BL23) (Lactobacillus casei).